A 563-amino-acid polypeptide reads, in one-letter code: Tripeptidyl-peptidase 1 (563 aa).

Residues methionine 1 to cysteine 19 form the signal peptide. A propeptide spans serine 20–glycine 195 (removed in mature form). Cysteine 111 and cysteine 122 are oxidised to a cystine. The 365-residue stretch at glycine 199–proline 563 folds into the Peptidase S53 domain. Residues asparagine 210 and asparagine 222 are each glycosylated (N-linked (GlcNAc...) asparagine). Active-site charge relay system residues include glutamate 272 and aspartate 276. 3 N-linked (GlcNAc...) asparagine glycosylation sites follow: asparagine 286, asparagine 313, and asparagine 443. Intrachain disulfides connect cysteine 365–cysteine 526 and cysteine 522–cysteine 537. Serine 475 acts as the Charge relay system in catalysis. Ca(2+) is bound by residues aspartate 517 and valine 518. Ca(2+)-binding residues include glycine 539, glycine 541, and aspartate 543.

As to quaternary structure, monomer. Interacts with CLN5. Interacts with CLN3. It depends on Ca(2+) as a cofactor. Post-translationally, activated by autocatalytic proteolytical processing upon acidification. N-glycosylation is required for processing and activity.

It localises to the lysosome. The protein resides in the melanosome. It catalyses the reaction Release of an N-terminal tripeptide from a polypeptide, but also has endopeptidase activity.. Functionally, lysosomal serine protease with tripeptidyl-peptidase I activity. May act as a non-specific lysosomal peptidase which generates tripeptides from the breakdown products produced by lysosomal proteinases. Requires substrates with an unsubstituted N-terminus. The polypeptide is Tripeptidyl-peptidase 1 (TPP1) (Pan troglodytes (Chimpanzee)).